The sequence spans 350 residues: Dihydroorotase (350 aa).

Zn(2+) contacts are provided by histidine 17 and histidine 19. Residues 19–21 (HLR) and asparagine 45 each bind substrate. 3 residues coordinate Zn(2+): lysine 103, histidine 140, and histidine 178. Lysine 103 carries the N6-carboxylysine modification. Position 140 (histidine 140) interacts with substrate. Leucine 224 provides a ligand contact to substrate. Zn(2+) is bound at residue aspartate 252. Aspartate 252 is an active-site residue. Residues histidine 256 and alanine 268 each contribute to the substrate site.

This sequence belongs to the metallo-dependent hydrolases superfamily. DHOase family. Class II DHOase subfamily. As to quaternary structure, homodimer. The cofactor is Zn(2+).

It carries out the reaction (S)-dihydroorotate + H2O = N-carbamoyl-L-aspartate + H(+). It participates in pyrimidine metabolism; UMP biosynthesis via de novo pathway; (S)-dihydroorotate from bicarbonate: step 3/3. In terms of biological role, catalyzes the reversible cyclization of carbamoyl aspartate to dihydroorotate. This Buchnera aphidicola subsp. Acyrthosiphon pisum (strain APS) (Acyrthosiphon pisum symbiotic bacterium) protein is Dihydroorotase.